The sequence spans 472 residues: Methanethiol oxidase (472 aa).

Ala-2 is subject to N-acetylalanine. Ser-111, Ser-371, and Ser-467 each carry phosphoserine.

Belongs to the selenium-binding protein family. As to quaternary structure, interacts with USP33. In terms of processing, the N-terminus is blocked.

It is found in the nucleus. The protein resides in the cytoplasm. The protein localises to the cytosol. It localises to the membrane. It catalyses the reaction methanethiol + O2 + H2O = hydrogen sulfide + formaldehyde + H2O2 + H(+). It participates in organosulfur degradation. Catalyzes the oxidation of methanethiol, an organosulfur compound known to be produced in substantial amounts by gut bacteria. Selenium-binding protein which may be involved in the sensing of reactive xenobiotics in the cytoplasm. May be involved in intra-Golgi protein transport. The protein is Methanethiol oxidase (SELENBP1) of Pongo abelii (Sumatran orangutan).